The sequence spans 116 residues: Large ribosomal subunit protein bL17 (116 aa).

The protein belongs to the bacterial ribosomal protein bL17 family. As to quaternary structure, part of the 50S ribosomal subunit. Contacts protein L32.

The polypeptide is Large ribosomal subunit protein bL17 (Rippkaea orientalis (strain PCC 8801 / RF-1) (Cyanothece sp. (strain PCC 8801))).